The primary structure comprises 242 residues: Uridylate kinase (242 aa).

Residue 11–14 coordinates ATP; it reads KLSG. The involved in allosteric activation by GTP stretch occupies residues 19–24; the sequence is GNMGYG. Gly53 is a UMP binding site. Positions 54 and 58 each coordinate ATP. Residues Asp73 and 134–141 contribute to the UMP site; that span reads SGNPFFTT. Residues Thr161, Tyr167, and Asp170 each contribute to the ATP site.

Belongs to the UMP kinase family. As to quaternary structure, homohexamer.

The protein resides in the cytoplasm. The catalysed reaction is UMP + ATP = UDP + ADP. The protein operates within pyrimidine metabolism; CTP biosynthesis via de novo pathway; UDP from UMP (UMPK route): step 1/1. Its activity is regulated as follows. Allosterically activated by GTP. Inhibited by UTP. Catalyzes the reversible phosphorylation of UMP to UDP. In Trichormus variabilis (strain ATCC 29413 / PCC 7937) (Anabaena variabilis), this protein is Uridylate kinase.